Reading from the N-terminus, the 307-residue chain is Aspartate carbamoyltransferase catalytic subunit (307 aa).

Positions 55 and 56 each coordinate carbamoyl phosphate. Position 85 (Lys-85) interacts with L-aspartate. Carbamoyl phosphate-binding residues include Arg-106, His-135, and Gln-138. Residues Arg-168 and Arg-230 each contribute to the L-aspartate site. Residues Leu-268 and Pro-269 each coordinate carbamoyl phosphate.

Belongs to the aspartate/ornithine carbamoyltransferase superfamily. ATCase family. In terms of assembly, heterododecamer (2C3:3R2) of six catalytic PyrB chains organized as two trimers (C3), and six regulatory PyrI chains organized as three dimers (R2).

It catalyses the reaction carbamoyl phosphate + L-aspartate = N-carbamoyl-L-aspartate + phosphate + H(+). Its pathway is pyrimidine metabolism; UMP biosynthesis via de novo pathway; (S)-dihydroorotate from bicarbonate: step 2/3. Functionally, catalyzes the condensation of carbamoyl phosphate and aspartate to form carbamoyl aspartate and inorganic phosphate, the committed step in the de novo pyrimidine nucleotide biosynthesis pathway. This chain is Aspartate carbamoyltransferase catalytic subunit, found in Photorhabdus laumondii subsp. laumondii (strain DSM 15139 / CIP 105565 / TT01) (Photorhabdus luminescens subsp. laumondii).